The primary structure comprises 299 residues: HTH-type transcriptional regulator CrgA (299 aa).

The 60-residue stretch at 1-60 (MKTNSEELTVFVQVVESGSFSRAAEQLAMANSAVSRIVKRLEEKLGVNLLNRTTRQLSLT) folds into the HTH lysR-type domain. Residues 20–39 (FSRAAEQLAMANSAVSRIVK) constitute a DNA-binding region (H-T-H motif).

It belongs to the LysR transcriptional regulatory family. Forms oligomers. Forms an octomeric ring-like structure in solution. May form hexadecamers when bound to target DNA.

Activation and repression activities are enhanced by the addition of alpha-methylene-gamma-butyrolactone (MBL), an inducer of NADPH:quinone oxidoreductase. In terms of biological role, regulatory protein that activates transcription of mdaB, encoding a NADPH:quinone oxidoreductase, and represses its own transcription. Under the same experimental conditions, no regulation of transcription of pilus and capsule genes is detected. The chain is HTH-type transcriptional regulator CrgA from Neisseria meningitidis serogroup B (strain ATCC BAA-335 / MC58).